Reading from the N-terminus, the 370-residue chain is Death-associated protein kinase 2 (370 aa).

Residues 23–285 (YDIGEELGSG…IQEALRHPWI (263 aa)) form the Protein kinase domain. Residues 29–37 (LGSGQFAIV) and Lys-52 each bind ATP. Catalysis depends on Asp-149, which acts as the Proton acceptor. A calmodulin-binding region spans residues 277-344 (QEALRHPWIT…KVHLRPDEDL (68 aa)). Residues 292 to 301 (QAMVRRESVV) are autoinhibitory domain. Phosphoserine is present on Ser-299. Ser-318 carries the phosphoserine; by autocatalysis modification. The disordered stretch occupies residues 348 to 370 (ESDTEEDIARRKALHPRRRSSTS). Phosphoserine is present on Ser-349. Residues 358 to 370 (RKALHPRRRSSTS) are compositionally biased toward basic residues. Thr-369 bears the Phosphothreonine; by PKB/AKT1 mark.

Belongs to the protein kinase superfamily. CAMK Ser/Thr protein kinase family. DAP kinase subfamily. As to quaternary structure, homodimer in its autoinhibited state. Active as monomer. Isoform 2 but not isoform 1 can interact with ATF4. Interacts with 14-3-3 proteins YWHAB, YWHAE, YWHAG, YWHAH, YWHAQ, YWHAZ and SFN; the interaction requires DAPK2 phosphorylation at Thr-369 and suppresses DAPK2 kinase activity and DAPK2-induced apoptosis. Requires Mg(2+) as cofactor. In terms of processing, autophosphorylation at Ser-318 inhibits its catalytic activity. Dephosphorylated at Ser-318 in response to activated Fas and TNF-alpha receptors. Expressed in neutrophils and eosinophils. Isoform 2 is expressed in embryonic stem cells (at protein level). Isoform 1 is ubiquitously expressed in all tissue types examined with high levels in heart, lung and skeletal muscle.

The protein resides in the cytoplasm. It is found in the cytoplasmic vesicle. It localises to the autophagosome lumen. It carries out the reaction L-seryl-[protein] + ATP = O-phospho-L-seryl-[protein] + ADP + H(+). It catalyses the reaction L-threonyl-[protein] + ATP = O-phospho-L-threonyl-[protein] + ADP + H(+). With respect to regulation, activated by Ca(2+)/calmodulin. Regulated by a double locking mechanism, involving autophosphorylation at Ser-318, calmodulin binding, and dimerization. In the inactive state, Ser-318 is phosphorylated, and the kinase is dimeric. Activation involves: dephosphorylation at Ser-318, release-of-autoinhibition mechanism where calmodulin binding induces a conformational change that relieves the steric block of the active site by the autoinhibitory domain, and generation of the monomeric active form of the kinase. Functionally, calcium/calmodulin-dependent serine/threonine kinase involved in multiple cellular signaling pathways that trigger cell survival, apoptosis, and autophagy. Regulates both type I apoptotic and type II autophagic cell death signals, depending on the cellular setting. The former is caspase-dependent, while the latter is caspase-independent and is characterized by the accumulation of autophagic vesicles. Acts as a mediator of anoikis and a suppressor of beta-catenin-dependent anchorage-independent growth of malignant epithelial cells. May play a role in granulocytic maturation. Regulates granulocytic motility by controlling cell spreading and polarization. Its function is as follows. Isoform 2 is not regulated by calmodulin. It can phosphorylate MYL9. It can induce membrane blebbing and autophagic cell death. This is Death-associated protein kinase 2 (DAPK2) from Homo sapiens (Human).